We begin with the raw amino-acid sequence, 77 residues long: Translation initiation factor IF-1, chloroplastic (77 aa).

Residues M1–R71 enclose the S1-like domain.

The protein belongs to the IF-1 family. As to quaternary structure, component of the 30S ribosomal translation pre-initiation complex which assembles on the 30S ribosome in the order IF-2 and IF-3, IF-1 and N-formylmethionyl-tRNA(fMet); mRNA recruitment can occur at any time during PIC assembly.

It is found in the plastid. Its subcellular location is the chloroplast. Functionally, one of the essential components for the initiation of protein synthesis. Stabilizes the binding of IF-2 and IF-3 on the 30S subunit to which N-formylmethionyl-tRNA(fMet) subsequently binds. Helps modulate mRNA selection, yielding the 30S pre-initiation complex (PIC). Upon addition of the 50S ribosomal subunit IF-1, IF-2 and IF-3 are released leaving the mature 70S translation initiation complex. In Spinacia oleracea (Spinach), this protein is Translation initiation factor IF-1, chloroplastic.